A 243-amino-acid chain; its full sequence is Large ribosomal subunit protein uL30 (243 aa).

A disordered region spans residues 1–31; sequence MADKILTPESQLKKSKAQQKSAEQVAAERAA. Residues 18 to 28 show a composition bias toward low complexity; the sequence is QQKSAEQVAAE.

Belongs to the universal ribosomal protein uL30 family.

This chain is Large ribosomal subunit protein uL30 (RPL7), found in Eremothecium gossypii (strain ATCC 10895 / CBS 109.51 / FGSC 9923 / NRRL Y-1056) (Yeast).